We begin with the raw amino-acid sequence, 191 residues long: 3-isopropylmalate dehydratase small subunit (191 aa).

It belongs to the LeuD family. LeuD type 1 subfamily. Heterodimer of LeuC and LeuD.

It carries out the reaction (2R,3S)-3-isopropylmalate = (2S)-2-isopropylmalate. Its pathway is amino-acid biosynthesis; L-leucine biosynthesis; L-leucine from 3-methyl-2-oxobutanoate: step 2/4. Functionally, catalyzes the isomerization between 2-isopropylmalate and 3-isopropylmalate, via the formation of 2-isopropylmaleate. This chain is 3-isopropylmalate dehydratase small subunit, found in Staphylococcus haemolyticus (strain JCSC1435).